A 226-amino-acid polypeptide reads, in one-letter code: Lipoprotein-releasing system ATP-binding protein LolD (226 aa).

One can recognise an ABC transporter domain in the interval 6–226 (VLISGLTKTF…KLYKGNLEEV (221 aa)). An ATP-binding site is contributed by 42-49 (GESGSGKS).

The protein belongs to the ABC transporter superfamily. Lipoprotein translocase (TC 3.A.1.125) family. As to quaternary structure, the complex is composed of two ATP-binding proteins (LolD) and two transmembrane proteins (LolC and LolE).

It is found in the cell inner membrane. Part of the ABC transporter complex LolCDE involved in the translocation of mature outer membrane-directed lipoproteins, from the inner membrane to the periplasmic chaperone, LolA. Responsible for the formation of the LolA-lipoprotein complex in an ATP-dependent manner. The sequence is that of Lipoprotein-releasing system ATP-binding protein LolD from Treponema denticola (strain ATCC 35405 / DSM 14222 / CIP 103919 / JCM 8153 / KCTC 15104).